We begin with the raw amino-acid sequence, 174 residues long: MANRRKNPRKVEKETDWQERVVQIRRVSKVVKGGKKLSFRAIVVVGNERGQVGVGVGKAADVIGAVRKGVADGKKHLIDVPITKSNSIPHPTFGEGGAARVMIRPAAPGTGVIAGGSVRTVLELAGVRNVLAKQLGSSNPLNNARAALEALAALRTFQEVAEEREIPIENLYSK.

Residues 17-80 (WQERVVQIRR…ADGKKHLIDV (64 aa)) enclose the S5 DRBM domain.

Belongs to the universal ribosomal protein uS5 family. As to quaternary structure, part of the 30S ribosomal subunit. Contacts proteins S4 and S8.

Its function is as follows. With S4 and S12 plays an important role in translational accuracy. Functionally, located at the back of the 30S subunit body where it stabilizes the conformation of the head with respect to the body. The chain is Small ribosomal subunit protein uS5 from Thermosynechococcus vestitus (strain NIES-2133 / IAM M-273 / BP-1).